Consider the following 172-residue polypeptide: Adenine phosphoribosyltransferase (172 aa).

The protein belongs to the purine/pyrimidine phosphoribosyltransferase family. Homodimer.

Its subcellular location is the cytoplasm. The catalysed reaction is AMP + diphosphate = 5-phospho-alpha-D-ribose 1-diphosphate + adenine. It functions in the pathway purine metabolism; AMP biosynthesis via salvage pathway; AMP from adenine: step 1/1. In terms of biological role, catalyzes a salvage reaction resulting in the formation of AMP, that is energically less costly than de novo synthesis. The sequence is that of Adenine phosphoribosyltransferase from Clostridium acetobutylicum (strain ATCC 824 / DSM 792 / JCM 1419 / IAM 19013 / LMG 5710 / NBRC 13948 / NRRL B-527 / VKM B-1787 / 2291 / W).